Reading from the N-terminus, the 500-residue chain is Toluene-4-monooxygenase system, hydroxylase component subunit alpha (500 aa).

6 residues coordinate Fe cation: E104, E134, H137, E197, E231, and H234.

It belongs to the TmoA/XamoA family. As to quaternary structure, the alkene monooxygenase multicomponent enzyme system is composed of an electron transfer component and a monooxygenase component interacting with the effector protein TmoD. The electron transfer component is composed of a ferredoxin reductase (TmoF) and a ferredoxin (TmoC), and the monooxygenase component is formed by a heterohexamer (dimer of heterotrimers) of two alpha subunits (TmoA), two beta subunits (TmoE) and two gamma subunits (TmoB). Requires Fe(2+) as cofactor.

It catalyses the reaction toluene + NADH + O2 + H(+) = 4-methylphenol + NAD(+) + H2O. Its pathway is xenobiotic degradation; toluene degradation. Inhibited by Zn(2+) and Cu(2+). In terms of biological role, component of the toluene-4-monooxygenase multicomponent enzyme system which catalyzes the O2- and NADH-dependent hydroxylation of toluene to form p-cresol. Also able to convert benzene to phenol, catechol, and 1,2,3-trihydroxybenzene by successive hydroxylations. This Ectopseudomonas mendocina (Pseudomonas mendocina) protein is Toluene-4-monooxygenase system, hydroxylase component subunit alpha.